The following is a 102-amino-acid chain: Protein YcgL (102 aa).

The region spanning 14–98 (MFCVIYRSSK…PPEDLLKQHL (85 aa)) is the YcgL domain.

The chain is Protein YcgL from Salmonella agona (strain SL483).